The primary structure comprises 690 residues: Elongation factor G (690 aa).

In terms of domain architecture, tr-type G spans 8-283 (EYIRNIGICA…AVVGFLPSPI (276 aa)). Residues 17-24 (AHIDAGKT), 81-85 (DTPGH), and 135-138 (NKMD) contribute to the GTP site.

This sequence belongs to the TRAFAC class translation factor GTPase superfamily. Classic translation factor GTPase family. EF-G/EF-2 subfamily.

It is found in the cytoplasm. Functionally, catalyzes the GTP-dependent ribosomal translocation step during translation elongation. During this step, the ribosome changes from the pre-translocational (PRE) to the post-translocational (POST) state as the newly formed A-site-bound peptidyl-tRNA and P-site-bound deacylated tRNA move to the P and E sites, respectively. Catalyzes the coordinated movement of the two tRNA molecules, the mRNA and conformational changes in the ribosome. In Rickettsia canadensis (strain McKiel), this protein is Elongation factor G.